Here is a 680-residue protein sequence, read N- to C-terminus: WD repeat-containing protein 48 homolog (680 aa).

WD repeat units follow at residues 26 to 65 (QHRN…SEKY), 71 to 110 (HHND…CMST), 113 to 152 (THRD…ALTA), 164 to 203 (GSKD…RSMK), 206 to 245 (GHTE…CVQT), 248 to 287 (VHKE…NKTL), 290 to 329 (EEKA…RGTL), and 350 to 389 (KGGA…KKDT). Residues 594–618 (TPSGANANNSLQNSQSDGNSEGSQL) form a disordered region. Residues 596-609 (SGANANNSLQNSQS) are compositionally biased toward low complexity.

The protein belongs to the WD repeat WDR48 family. Catalytic component of the Usp12-46 deubiquitylase complex consisting of Usp12-46, Wdr20 and Uaf1; regulatory subunit that, together wtih Wdr20, stabilizes Usp12-46. The Usp12-46 deubiquitylase complex associates with arr/arrow; the interaction leads to deubiquitination and stabilization of arr/arrow.

Regulatory component of the Usp12-46 deubiquitylase complex. activates deubiquitination by increasing the catalytic turnover without increasing the affinity of deubiquitinating enzymes for the substrate. The complex deubiquitylates the wg/wingless-signaling receptor arr/arrow, which stabilizes the receptor and increases its concentration at the cell surface; this enhances the sensitivity of cells to wg/wingless-signal stimulation. This increases the amplitude and spatial range of the signaling response to the wg/wingless morphogen gradient, facilitating the precise concentration-dependent regulation of its target genes. Together with Wdr20 and Usp12-46 required for wg/wingless-mediated signaling in the wing imaginal disc and for wg/wingless-dependent regulation of intestinal stem cell proliferation. The sequence is that of WD repeat-containing protein 48 homolog from Drosophila persimilis (Fruit fly).